The following is a 173-amino-acid chain: Alpha-crystallin A chain (173 aa).

M1 carries the post-translational modification N-acetylmethionine. Residues 1–63 are required for complex formation with BFSP1 and BFSP2; that stretch reads MDVTIQHPWF…RTVLDSGISE (63 aa). Q6 is subject to Deamidated glutamine; partial. Phosphoserine is present on S45. The residue at position 50 (Q50) is a Deamidated glutamine; partial. The sHSP domain maps to 52 to 162; it reads LFRTVLDSGI…SHSERAIPVS (111 aa). Residue K99 is modified to N6-acetyllysine. H100 contacts Zn(2+). The residue at position 101 (N101) is a Deamidated asparagine; partial. Positions 102 and 107 each coordinate Zn(2+). Residue S122 is modified to Phosphoserine. N123 is subject to Deamidated asparagine; partial. C131 and C142 are disulfide-bonded. Q147 is subject to Deamidated glutamine; partial. The disordered stretch occupies residues 147 to 173; it reads QSGMDASHSERAIPVSREEKPSSAPSS. The segment covering 153–167 has biased composition (basic and acidic residues); that stretch reads SHSERAIPVSREEKP. Zn(2+) is bound at residue H154. S162 carries an O-linked (GlcNAc) serine glycan.

The protein belongs to the small heat shock protein (HSP20) family. In terms of assembly, heteromer composed of three CRYAA and one CRYAB subunits. Inter-subunit bridging via zinc ions enhances stability, which is crucial as there is no protein turn over in the lens. Can also form homodimers and homotetramers (dimers of dimers) which serve as the building blocks of homooligomers. Within homooligomers, the zinc-binding motif is created from residues of 3 different molecules. His-100 and Glu-102 from one molecule are ligands of the zinc ion, and His-107 and His-154 residues from additional molecules complete the site with tetrahedral coordination geometry. Part of a complex required for lens intermediate filament formation composed of BFSP1, BFSP2 and CRYAA. Undergoes age-dependent proteolytical cleavage at the C-terminus.

Its subcellular location is the cytoplasm. The protein resides in the nucleus. Functionally, contributes to the transparency and refractive index of the lens. In its oxidized form (absence of intramolecular disulfide bond), acts as a chaperone, preventing aggregation of various proteins under a wide range of stress conditions. Required for the correct formation of lens intermediate filaments as part of a complex composed of BFSP1, BFSP2 and CRYAA. This Procavia capensis (Rock hyrax) protein is Alpha-crystallin A chain (CRYAA).